A 962-amino-acid polypeptide reads, in one-letter code: Glycine dehydrogenase (decarboxylating) (962 aa).

K709 bears the N6-(pyridoxal phosphate)lysine mark.

It belongs to the GcvP family. As to quaternary structure, the glycine cleavage system is composed of four proteins: P, T, L and H. Pyridoxal 5'-phosphate serves as cofactor.

It catalyses the reaction N(6)-[(R)-lipoyl]-L-lysyl-[glycine-cleavage complex H protein] + glycine + H(+) = N(6)-[(R)-S(8)-aminomethyldihydrolipoyl]-L-lysyl-[glycine-cleavage complex H protein] + CO2. Its function is as follows. The glycine cleavage system catalyzes the degradation of glycine. The P protein binds the alpha-amino group of glycine through its pyridoxal phosphate cofactor; CO(2) is released and the remaining methylamine moiety is then transferred to the lipoamide cofactor of the H protein. In Shewanella baltica (strain OS223), this protein is Glycine dehydrogenase (decarboxylating).